A 187-amino-acid polypeptide reads, in one-letter code: Elongation factor P (187 aa).

The protein belongs to the elongation factor P family.

The protein localises to the cytoplasm. It functions in the pathway protein biosynthesis; polypeptide chain elongation. In terms of biological role, involved in peptide bond synthesis. Stimulates efficient translation and peptide-bond synthesis on native or reconstituted 70S ribosomes in vitro. Probably functions indirectly by altering the affinity of the ribosome for aminoacyl-tRNA, thus increasing their reactivity as acceptors for peptidyl transferase. This is Elongation factor P from Parvibaculum lavamentivorans (strain DS-1 / DSM 13023 / NCIMB 13966).